A 239-amino-acid polypeptide reads, in one-letter code: Cytochrome b6-f complex iron-sulfur subunit 1, cyanelle (239 aa).

The transit peptide at M1–S60 directs the protein to the cyanelle. The chain crosses the membrane as a helical span at residues L81 to V101. One can recognise a Rieske domain in the interval V125–A221. [2Fe-2S] cluster-binding residues include C167, H169, C185, and H188. C172 and C187 are disulfide-bonded.

It belongs to the Rieske iron-sulfur protein family. As to quaternary structure, the 4 large subunits of the cytochrome b6-f complex are cytochrome b6, subunit IV (17 kDa polypeptide, petD), cytochrome f and the Rieske protein, while the 4 small subunits are petG, petL, petM and petN. The complex functions as a dimer. [2Fe-2S] cluster is required as a cofactor.

The protein resides in the plastid. The protein localises to the cyanelle thylakoid membrane. It catalyses the reaction 2 oxidized [plastocyanin] + a plastoquinol + 2 H(+)(in) = 2 reduced [plastocyanin] + a plastoquinone + 4 H(+)(out). Its function is as follows. Component of the cytochrome b6-f complex, which mediates electron transfer between photosystem II (PSII) and photosystem I (PSI), cyclic electron flow around PSI, and state transitions. This is Cytochrome b6-f complex iron-sulfur subunit 1, cyanelle (petC-1) from Cyanophora paradoxa.